Reading from the N-terminus, the 246-residue chain is Trypsin-5 (246 aa).

The signal sequence occupies residues 1 to 15 (MNSLLFLALVGAAVA). Positions 16 to 23 (FPVDDDDK) are cleaved as a propeptide — activation peptide. The 221-residue stretch at 24–244 (IVGGYTCREN…YVDWIQDTIA (221 aa)) folds into the Peptidase S1 domain. Cysteines 48 and 64 form a disulfide. Active-site charge relay system residues include H63 and D107. 3 disulfides stabilise this stretch: C139-C206, C171-C185, and C196-C220. S200 functions as the Charge relay system in the catalytic mechanism.

The protein belongs to the peptidase S1 family. Proteolytically cleaved and activated by an autocatalytic mechanism. Cleavage by CTRC inhibits autoactivation. In terms of tissue distribution, expressed in the heart, lung, brain, kidney, liver, epididymis, ovary and uterus. Expression in the testis is limited to round and elongating spermatids.

It localises to the cytoplasmic vesicle. Its subcellular location is the secretory vesicle. It is found in the acrosome. It catalyses the reaction Preferential cleavage: Arg-|-Xaa, Lys-|-Xaa.. Its activity is regulated as follows. Activated by autocatalytic cleavage. Cleavage by CTRC inhibits autoactivation. Serine protease capable of autoactivation. This Mus musculus (Mouse) protein is Trypsin-5.